Here is a 205-residue protein sequence, read N- to C-terminus: Small ribosomal subunit protein uS4 (205 aa).

Residues 19–45 form a disordered region; that stretch reads IWGRPKSPVNRREYGPGQHGQRRKGKL. The S4 RNA-binding domain maps to 94–157; it reads SRLDAVVYRA…KQLAIVLEAV (64 aa).

The protein belongs to the universal ribosomal protein uS4 family. In terms of assembly, part of the 30S ribosomal subunit. Contacts protein S5. The interaction surface between S4 and S5 is involved in control of translational fidelity.

In terms of biological role, one of the primary rRNA binding proteins, it binds directly to 16S rRNA where it nucleates assembly of the body of the 30S subunit. Its function is as follows. With S5 and S12 plays an important role in translational accuracy. The polypeptide is Small ribosomal subunit protein uS4 (Brucella melitensis biotype 2 (strain ATCC 23457)).